Consider the following 320-residue polypeptide: N-acetylneuraminate lyase (320 aa).

Aceneuramate-binding residues include Thr-51 and Thr-52. Tyr-143 acts as the Proton donor in catalysis. Lys-173 serves as the catalytic Schiff-base intermediate with substrate. Residues Thr-175, Gly-199, Asp-201, Glu-202, and Ser-218 each coordinate aceneuramate. Ser-308 carries the post-translational modification Phosphoserine.

Belongs to the DapA family. NanA subfamily. In terms of assembly, homotetramer.

It is found in the cytoplasm. The catalysed reaction is aceneuramate = aldehydo-N-acetyl-D-mannosamine + pyruvate. It functions in the pathway amino-sugar metabolism; N-acetylneuraminate degradation. Catalyzes the cleavage of N-acetylneuraminic acid (sialic acid) to form pyruvate and N-acetylmannosamine via a Schiff base intermediate. It prevents sialic acids from being recycled and returning to the cell surface. Involved in the N-glycolylneuraminic acid (Neu5Gc) degradation pathway. The polypeptide is N-acetylneuraminate lyase (Mus musculus (Mouse)).